The sequence spans 185 residues: Large ribosomal subunit protein uL10 (185 aa).

The tract at residues 165 to 185 (LRAKKEEQGGAGTPAPAEAAE) is disordered.

The protein belongs to the universal ribosomal protein uL10 family. Part of the ribosomal stalk of the 50S ribosomal subunit. The N-terminus interacts with L11 and the large rRNA to form the base of the stalk. The C-terminus forms an elongated spine to which L12 dimers bind in a sequential fashion forming a multimeric L10(L12)X complex.

Its function is as follows. Forms part of the ribosomal stalk, playing a central role in the interaction of the ribosome with GTP-bound translation factors. The polypeptide is Large ribosomal subunit protein uL10 (Streptomyces griseus subsp. griseus (strain JCM 4626 / CBS 651.72 / NBRC 13350 / KCC S-0626 / ISP 5235)).